The chain runs to 660 residues: Bifunctional polymyxin resistance protein ArnA (660 aa).

The formyltransferase ArnAFT stretch occupies residues 1-304 (MKTVVFAYHD…TLGLVQGSRL (304 aa)). 86–88 (HLI) is a (6R)-10-formyltetrahydrofolate binding site. H104 (proton donor; for formyltransferase activity) is an active-site residue. (6R)-10-formyltetrahydrofolate contacts are provided by residues R114 and 136–140 (VKRAD). Positions 314–660 (RRTRVLILGV…RTVDLTDKPS (347 aa)) are dehydrogenase ArnADH. Residues D347 and 368 to 369 (DI) contribute to the NAD(+) site. Residues A393, Y398, and 432-433 (TS) contribute to the UDP-alpha-D-glucuronate site. The Proton acceptor; for decarboxylase activity role is filled by E434. UDP-alpha-D-glucuronate is bound by residues R460, N492, 526-535 (KLIDGGKQKR), and Y613. Catalysis depends on R619, which acts as the Proton donor; for decarboxylase activity.

In the N-terminal section; belongs to the Fmt family. UDP-L-Ara4N formyltransferase subfamily. It in the C-terminal section; belongs to the NAD(P)-dependent epimerase/dehydratase family. UDP-glucuronic acid decarboxylase subfamily. As to quaternary structure, homohexamer, formed by a dimer of trimers.

The enzyme catalyses UDP-alpha-D-glucuronate + NAD(+) = UDP-beta-L-threo-pentopyranos-4-ulose + CO2 + NADH. The catalysed reaction is UDP-4-amino-4-deoxy-beta-L-arabinose + (6R)-10-formyltetrahydrofolate = UDP-4-deoxy-4-formamido-beta-L-arabinose + (6S)-5,6,7,8-tetrahydrofolate + H(+). It participates in nucleotide-sugar biosynthesis; UDP-4-deoxy-4-formamido-beta-L-arabinose biosynthesis; UDP-4-deoxy-4-formamido-beta-L-arabinose from UDP-alpha-D-glucuronate: step 1/3. Its pathway is nucleotide-sugar biosynthesis; UDP-4-deoxy-4-formamido-beta-L-arabinose biosynthesis; UDP-4-deoxy-4-formamido-beta-L-arabinose from UDP-alpha-D-glucuronate: step 3/3. The protein operates within bacterial outer membrane biogenesis; lipopolysaccharide biosynthesis. Bifunctional enzyme that catalyzes the oxidative decarboxylation of UDP-glucuronic acid (UDP-GlcUA) to UDP-4-keto-arabinose (UDP-Ara4O) and the addition of a formyl group to UDP-4-amino-4-deoxy-L-arabinose (UDP-L-Ara4N) to form UDP-L-4-formamido-arabinose (UDP-L-Ara4FN). The modified arabinose is attached to lipid A and is required for resistance to polymyxin and cationic antimicrobial peptides. In Escherichia coli (strain K12 / MC4100 / BW2952), this protein is Bifunctional polymyxin resistance protein ArnA.